The chain runs to 440 residues: Ankyrin repeat and MYND domain-containing protein 2 (440 aa).

3 ANK repeats span residues 45 to 74, 79 to 108, and 159 to 188; these read NGMT…DASC, HGYT…ETDV, and KLAG…NPLL. 8 residues coordinate Zn(2+): Cys-320, Cys-323, Cys-332, Cys-335, Cys-341, Cys-345, His-353, and Cys-357. The segment at 320–357 adopts an MYND-type zinc-finger fold; the sequence is CTTCGEKGASKRCSVCKMVIYCDQTCQKTHWFAHKKMC. Positions 371–381 are enriched in basic and acidic residues; the sequence is AAKHKRQEEKN. The disordered stretch occupies residues 371-440; the sequence is AAKHKRQEEK…APTGPQLSEE (70 aa).

In terms of assembly, interacts with the retinal-specific guanylyl cyclase GC1.

The protein localises to the cell projection. It is found in the cilium. Functionally, may be involved in the trafficking of signaling proteins to the cilia. The polypeptide is Ankyrin repeat and MYND domain-containing protein 2 (Ankmy2) (Mus musculus (Mouse)).